Here is a 144-residue protein sequence, read N- to C-terminus: Large ribosomal subunit protein uL15 (144 aa).

Positions 1-53 (MRLNTLSPAEGAKHAPKRVGRGIGSGLGKTGGRGHKGQKSRSGGGVRRGFEGG) are disordered. The span at 21–31 (RGIGSGLGKTG) shows a compositional bias: gly residues.

This sequence belongs to the universal ribosomal protein uL15 family. In terms of assembly, part of the 50S ribosomal subunit.

Its function is as follows. Binds to the 23S rRNA. The polypeptide is Large ribosomal subunit protein uL15 (Proteus mirabilis (strain HI4320)).